The primary structure comprises 331 residues: Glutamyl-tRNA reductase (331 aa).

Substrate contacts are provided by residues 49–52 (TCNR), Ser-107, 112–114 (EDQ), and Gln-118. The active-site Nucleophile is Cys-50. 184-189 (GNGEIG) serves as a coordination point for NADP(+).

This sequence belongs to the glutamyl-tRNA reductase family. As to quaternary structure, homodimer.

The enzyme catalyses (S)-4-amino-5-oxopentanoate + tRNA(Glu) + NADP(+) = L-glutamyl-tRNA(Glu) + NADPH + H(+). Its pathway is porphyrin-containing compound metabolism; protoporphyrin-IX biosynthesis; 5-aminolevulinate from L-glutamyl-tRNA(Glu): step 1/2. Its function is as follows. Catalyzes the NADPH-dependent reduction of glutamyl-tRNA(Glu) to glutamate 1-semialdehyde (GSA). This chain is Glutamyl-tRNA reductase, found in Acetivibrio thermocellus (strain ATCC 27405 / DSM 1237 / JCM 9322 / NBRC 103400 / NCIMB 10682 / NRRL B-4536 / VPI 7372) (Clostridium thermocellum).